The following is a 363-amino-acid chain: Aminomethyltransferase (363 aa).

This sequence belongs to the GcvT family. The glycine cleavage system is composed of four proteins: P, T, L and H.

The catalysed reaction is N(6)-[(R)-S(8)-aminomethyldihydrolipoyl]-L-lysyl-[protein] + (6S)-5,6,7,8-tetrahydrofolate = N(6)-[(R)-dihydrolipoyl]-L-lysyl-[protein] + (6R)-5,10-methylene-5,6,7,8-tetrahydrofolate + NH4(+). Functionally, the glycine cleavage system catalyzes the degradation of glycine. This is Aminomethyltransferase from Staphylococcus aureus (strain MRSA252).